A 442-amino-acid polypeptide reads, in one-letter code: Magnesium transporter MRS2-1 (442 aa).

The tract at residues 1–30 (MSELKERLLPPRPASAMNLRDASVTRPSAS) is disordered. Transmembrane regions (helical) follow at residues 378-398 (LLLTTATFVVAIFGVVAGIFG) and 414-434 (WVLIITGVCGFVIFSAFVWFF). A Required for magnesium transport activity motif is present at residues 398 to 400 (GMN).

The protein belongs to the CorA metal ion transporter (MIT) (TC 1.A.35.5) family. As to expression, expressed in the whole plant except stems.

The protein resides in the membrane. Its function is as follows. Magnesium transporter that may mediate the influx of magnesium. The polypeptide is Magnesium transporter MRS2-1 (MRS2-1) (Arabidopsis thaliana (Mouse-ear cress)).